The chain runs to 292 residues: Elongation factor Ts (292 aa).

Residues 79 to 82 (TDFV) are involved in Mg(2+) ion dislocation from EF-Tu.

The protein belongs to the EF-Ts family.

It is found in the cytoplasm. In terms of biological role, associates with the EF-Tu.GDP complex and induces the exchange of GDP to GTP. It remains bound to the aminoacyl-tRNA.EF-Tu.GTP complex up to the GTP hydrolysis stage on the ribosome. This chain is Elongation factor Ts (tsf), found in Idiomarina loihiensis (strain ATCC BAA-735 / DSM 15497 / L2-TR).